The sequence spans 916 residues: Major intrinsically disordered Notch2-binding receptor 1 (916 aa).

The Cytoplasmic segment spans residues 1-891; that stretch reads METSQETSLF…AEFRRAKVCK (891 aa). Disordered regions lie at residues 390–409, 553–591, 648–675, 705–726, and 745–782; these read EEKL…PAPE, KSDC…SEEE, SLTS…GPKL, TRPS…IASI, and NEEE…LPKQ. Basic and acidic residues-rich tracts occupy residues 553-564 and 575-591; these read KSDCDSSPEHNL and KGDK…SEEE. Residue S711 is modified to Phosphoserine. A compositionally biased stretch (basic and acidic residues) spans 750–771; that stretch reads KDTGPGDNKDWHRKSKEADRQY. Residues 892–912 traverse the membrane as a helical segment; the sequence is IAALIAAAACTVILVIVVPIC. The Extracellular portion of the chain corresponds to 913-916; the sequence is TMKS.

The protein belongs to the MINAR family. As to quaternary structure, interacts with NOTCH2; this interaction increases MINAR1 stability. Interacts (via N-terminus) with DEPTOR (via PDZ domain); this interaction may stabilize DEPTOR protein by impairing its ubiquitination. Widely expressed, including in breast epithelial cells and endothelial cells (at protein level). Expression is down-regulated in advanced breast tumors (at protein level).

It is found in the cell membrane. Its function is as follows. Intrinsically disordered protein which may negatively regulate mTOR signaling pathway by stabilizing the mTOR complex component DEPTOR. Negatively regulates angiogenesis. Negatively regulates cell growth. Negatively regulates neurite outgrowth in hippocampal neurons. The protein is Major intrinsically disordered Notch2-binding receptor 1 of Homo sapiens (Human).